Reading from the N-terminus, the 65-residue chain is Trypsin inhibitor (65 aa).

As to quaternary structure, homotrimer.

This is Trypsin inhibitor from Zea mays (Maize).